A 158-amino-acid chain; its full sequence is C-type lectin lectoxin-Enh4 (158 aa).

The N-terminal stretch at 1 to 23 is a signal peptide; it reads MGQFTVVSLGLLAMFLSLSGAKG. 3 disulfide bridges follow: C26–C37, C54–C154, and C129–C146. The C-type lectin domain occupies 33–155; sequence RNGVCNKLFP…CASLHPFICQ (123 aa). The Mannose-binding signature appears at 119-121; sequence EPN. Ca(2+)-binding residues include E127, N142, and D143.

It belongs to the true venom lectin family. Expressed by the venom gland.

The protein resides in the secreted. Mannose-binding lectin which recognizes specific carbohydrate structures and agglutinates a variety of animal cells by binding to cell-surface glycoproteins and glycolipids. May be a calcium-dependent lectin. The protein is C-type lectin lectoxin-Enh4 of Pseudoferania polylepis (Macleay's water snake).